Here is a 400-residue protein sequence, read N- to C-terminus: Opsin-3 (400 aa).

Over 1-38 the chain is Extracellular; it reads MYSGNRSGDQGYWEDGAGAEGAAPAGTRSPAPLFSPTA. An N-linked (GlcNAc...) asparagine glycan is attached at N5. A helical membrane pass occupies residues 39-63; the sequence is YERLALLLGCLALLGVGGNLLVLLL. Over 64–75 the chain is Cytoplasmic; that stretch reads YSKFPRLRTPTH. Residues 76–100 traverse the membrane as a helical segment; sequence LFLVNLSLGDLLVSLFGVTFTFASC. The Extracellular segment spans residues 101–115; sequence LRNGWVWDAVGCAWD. Cysteines 112 and 186 form a disulfide. A helical membrane pass occupies residues 116 to 135; the sequence is GFSGSLFGFVSITTLTVLAY. Residues 136-151 are Cytoplasmic-facing; the sequence is ERYIRVVHARVINFSW. A helical transmembrane segment spans residues 152–175; sequence AWRAITYIWLYSLAWAGAPLLGWN. The Extracellular portion of the chain corresponds to 176–199; sequence RYILDIHGLGCTVDWRSKDANDSS. The N-linked (GlcNAc...) asparagine glycan is linked to N196. The helical transmembrane segment at 200–227 threads the bilayer; sequence FVLFLFLGCLVVPVGIIAHCYGHILYSV. Topologically, residues 228–253 are cytoplasmic; sequence RMLRCVEDLQTIQVIKMLRYEKKVAK. Residues 254–277 traverse the membrane as a helical segment; sequence MCFLMAFVFLTCWMPYIVTRFLVV. Residues 278–285 lie on the Extracellular side of the membrane; the sequence is NGYGHLVT. The chain crosses the membrane as a helical span at residues 286 to 310; it reads PTVSIVSYLFAKSSTVYNPVIYIFM. K297 is modified (N6-(retinylidene)lysine). Topologically, residues 311–400 are cytoplasmic; the sequence is NRKFRRSLLQ…KVDVIQVRPL (90 aa). Residue C323 is the site of S-palmitoyl cysteine attachment.

It belongs to the G-protein coupled receptor 1 family. Opsin subfamily. In terms of assembly, interacts with MC1R; the interaction results in a decrease in MC1R-mediated cAMP signaling and ultimately a decrease in melanin production in melanocytes. Expressed in the eye (at protein level). Expressed in tracheal airway smooth muscle. Expressed in brown adipocyte tissue; expression becomes more abundant during differentiation. Strongly expressed in brain. Highly expressed in the preoptic area and paraventricular nucleus of the hypothalamus. Shows highly patterned expression in other regions of the brain, being enriched in selected regions of the cerebral cortex, cerebellar Purkinje cells, a subset of striatal neurons, selected thalamic nuclei, and a subset of interneurons in the ventral horn of the spinal cord.

The protein localises to the cell membrane. The protein resides in the cytoplasm. G-protein coupled receptor which selectively activates G proteins via ultraviolet A (UVA) light-mediated activation in the skin. Binds both 11-cis retinal and all-trans retinal. Regulates melanogenesis in melanocytes via inhibition of alpha-MSH-induced MC1R-mediated cAMP signaling, modulation of calcium flux, regulation of CAMK2 phosphorylation, and subsequently phosphorylation of CREB, p38, ERK and MITF in response to blue light. Plays a role in melanocyte survival through regulation of intracellular calcium levels and subsequent BCL2/RAF1 signaling. Additionally regulates apoptosis via cytochrome c release and subsequent activation of the caspase cascade. Required for TYR and DCT blue light-induced complex formation in melanocytes. Involved in keratinocyte differentiation in response to blue-light. Required for the UVA-mediated induction of calcium and mitogen-activated protein kinase signaling resulting in the expression of MMP1, MMP2, MMP3, MMP9 and TIMP1 in dermal fibroblasts. Plays a role in light-mediated glucose uptake, mitochondrial respiration and fatty acid metabolism in brown adipocyte tissues. May be involved in photorelaxation of airway smooth muscle cells, via blue-light dependent GPCR signaling pathways. This chain is Opsin-3 (Opn3), found in Mus musculus (Mouse).